The following is a 358-amino-acid chain: Replication factor C subunit 5 (358 aa).

Belongs to the activator 1 small subunits family. Heteropentamer of subunits rfc1, rfc2, rfc3, rfc4 and rfc5 that forms a complex (RFC) with PCNA in the presence of ATP. Two other complexes exist where rfc1 can be replaced by either ctf18 or elg1 to form the ctf18-RFC or the elg1-RFC complexes respectively.

Its subcellular location is the nucleus. The elongation of primed DNA templates by DNA polymerase delta and epsilon requires the action of the accessory proteins PCNA and activator 1. This Schizosaccharomyces pombe (strain 972 / ATCC 24843) (Fission yeast) protein is Replication factor C subunit 5 (rfc5).